Consider the following 100-residue polypeptide: uncharacterized protein (100 aa).

The protein localises to the mitochondrion. This is an uncharacterized protein from Arabidopsis thaliana (Mouse-ear cress).